Reading from the N-terminus, the 1406-residue chain is DNA-directed RNA polymerase subunit beta' (1406 aa).

Residues cysteine 70, cysteine 72, cysteine 85, and cysteine 88 each contribute to the Zn(2+) site. Mg(2+) is bound by residues aspartate 460, aspartate 462, and aspartate 464. Zn(2+)-binding residues include cysteine 814, cysteine 889, cysteine 896, and cysteine 899.

Belongs to the RNA polymerase beta' chain family. The RNAP catalytic core consists of 2 alpha, 1 beta, 1 beta' and 1 omega subunit. When a sigma factor is associated with the core the holoenzyme is formed, which can initiate transcription. Mg(2+) serves as cofactor. Zn(2+) is required as a cofactor.

The enzyme catalyses RNA(n) + a ribonucleoside 5'-triphosphate = RNA(n+1) + diphosphate. DNA-dependent RNA polymerase catalyzes the transcription of DNA into RNA using the four ribonucleoside triphosphates as substrates. This Stenotrophomonas maltophilia (strain K279a) protein is DNA-directed RNA polymerase subunit beta'.